We begin with the raw amino-acid sequence, 437 residues long: Probable receptor-like serine/threonine-protein kinase At4g34500 (437 aa).

Residues 25-45 (LVIAICSVFILLISLLIFLFV) traverse the membrane as a helical segment. The Protein kinase domain occupies 145 to 426 (FSDDNMIGEG…MLEAEDFPFR (282 aa)). Residues 151–159 (IGEGGYGVV) and Lys173 contribute to the ATP site. Tyr220 carries the phosphotyrosine modification. Asp273 (proton acceptor) is an active-site residue. At Ser277 the chain carries Phosphoserine. Phosphothreonine is present on residues Thr307 and Thr312. Phosphotyrosine is present on Tyr320.

It belongs to the protein kinase superfamily. Ser/Thr protein kinase family.

Its subcellular location is the cell membrane. It carries out the reaction L-seryl-[protein] + ATP = O-phospho-L-seryl-[protein] + ADP + H(+). It catalyses the reaction L-threonyl-[protein] + ATP = O-phospho-L-threonyl-[protein] + ADP + H(+). The sequence is that of Probable receptor-like serine/threonine-protein kinase At4g34500 from Arabidopsis thaliana (Mouse-ear cress).